The following is a 581-amino-acid chain: Arginine--tRNA ligase (581 aa).

The short motif at 126-136 is the 'HIGH' region element; that stretch reads PNLAKEMHVGH.

The protein belongs to the class-I aminoacyl-tRNA synthetase family. As to quaternary structure, monomer.

It is found in the cytoplasm. The enzyme catalyses tRNA(Arg) + L-arginine + ATP = L-arginyl-tRNA(Arg) + AMP + diphosphate. This Shewanella piezotolerans (strain WP3 / JCM 13877) protein is Arginine--tRNA ligase.